The primary structure comprises 100 residues: Large ribosomal subunit protein uL23 (100 aa).

This sequence belongs to the universal ribosomal protein uL23 family. As to quaternary structure, part of the 50S ribosomal subunit. Contacts protein L29, and trigger factor when it is bound to the ribosome.

One of the early assembly proteins it binds 23S rRNA. One of the proteins that surrounds the polypeptide exit tunnel on the outside of the ribosome. Forms the main docking site for trigger factor binding to the ribosome. The chain is Large ribosomal subunit protein uL23 from Buchnera aphidicola subsp. Schizaphis graminum (strain Sg).